A 238-amino-acid chain; its full sequence is MTTELHDDASGRLIVGLDVPTIAEAEKVVEELGNAVSFYKIGYQLVFAGGLDFAKSLVAARKKVFLDMKLLDIDNTIAKGVENVAKMGVSMLTLHAYPKAMRAAVEAARGSDLCLLGVTVLTSMDNADLREAGYFDNAETLVLKRARQAHEAGMGGIVASAVEAQAIRQAVGPDMAIVTPGIRPAGSEKGDQKRVMTPADALRAGASHLIVARPIVGAPDRKAAALAILKEMRSIGRS.

Substrate is bound by residues D18, K40, 67–76 (DMKLLDIDNT), T122, R183, Q192, and R213. Residue K69 is the Proton donor of the active site.

Belongs to the OMP decarboxylase family. Type 1 subfamily. In terms of assembly, homodimer.

The enzyme catalyses orotidine 5'-phosphate + H(+) = UMP + CO2. The protein operates within pyrimidine metabolism; UMP biosynthesis via de novo pathway; UMP from orotate: step 2/2. In terms of biological role, catalyzes the decarboxylation of orotidine 5'-monophosphate (OMP) to uridine 5'-monophosphate (UMP). This chain is Orotidine 5'-phosphate decarboxylase, found in Brucella melitensis biotype 2 (strain ATCC 23457).